We begin with the raw amino-acid sequence, 444 residues long: L-seryl-tRNA(Sec) selenium transferase (444 aa).

N6-(pyridoxal phosphate)lysine is present on Lys-284.

The protein belongs to the SelA family. Pyridoxal 5'-phosphate is required as a cofactor.

It localises to the cytoplasm. The enzyme catalyses L-seryl-tRNA(Sec) + selenophosphate + H(+) = L-selenocysteinyl-tRNA(Sec) + phosphate. The protein operates within aminoacyl-tRNA biosynthesis; selenocysteinyl-tRNA(Sec) biosynthesis; selenocysteinyl-tRNA(Sec) from L-seryl-tRNA(Sec) (bacterial route): step 1/1. Converts seryl-tRNA(Sec) to selenocysteinyl-tRNA(Sec) required for selenoprotein biosynthesis. The chain is L-seryl-tRNA(Sec) selenium transferase from Wolinella succinogenes (strain ATCC 29543 / DSM 1740 / CCUG 13145 / JCM 31913 / LMG 7466 / NCTC 11488 / FDC 602W) (Vibrio succinogenes).